Reading from the N-terminus, the 326-residue chain is tRNA-modifying protein YgfZ (326 aa).

2 residues coordinate folate: tryptophan 27 and tryptophan 189.

It belongs to the tRNA-modifying YgfZ family.

Its subcellular location is the cytoplasm. Its function is as follows. Folate-binding protein involved in regulating the level of ATP-DnaA and in the modification of some tRNAs. It is probably a key factor in regulatory networks that act via tRNA modification, such as initiation of chromosomal replication. This is tRNA-modifying protein YgfZ from Salmonella schwarzengrund (strain CVM19633).